A 148-amino-acid chain; its full sequence is D-aminoacyl-tRNA deacylase (148 aa).

A Gly-cisPro motif, important for rejection of L-amino acids motif is present at residues 136-137; sequence GP.

This sequence belongs to the DTD family. As to quaternary structure, homodimer.

It is found in the cytoplasm. The catalysed reaction is glycyl-tRNA(Ala) + H2O = tRNA(Ala) + glycine + H(+). The enzyme catalyses a D-aminoacyl-tRNA + H2O = a tRNA + a D-alpha-amino acid + H(+). Functionally, an aminoacyl-tRNA editing enzyme that deacylates mischarged D-aminoacyl-tRNAs. Also deacylates mischarged glycyl-tRNA(Ala), protecting cells against glycine mischarging by AlaRS. Acts via tRNA-based rather than protein-based catalysis; rejects L-amino acids rather than detecting D-amino acids in the active site. By recycling D-aminoacyl-tRNA to D-amino acids and free tRNA molecules, this enzyme counteracts the toxicity associated with the formation of D-aminoacyl-tRNA entities in vivo and helps enforce protein L-homochirality. The protein is D-aminoacyl-tRNA deacylase of Kosmotoga olearia (strain ATCC BAA-1733 / DSM 21960 / TBF 19.5.1).